Consider the following 527-residue polypeptide: PTS system maltose-specific EIICB component (527 aa).

Residues 1-418 (MMQKIQRFGS…FNIATPGREK (418 aa)) form the PTS EIIC type-1 domain. 12 consecutive transmembrane segments (helical) span residues 8 to 28 (FGSA…IVGI), 59 to 79 (GWTV…VALA), 93 to 113 (VYLT…GAFG), 132 to 152 (IKTL…VVFL), 173 to 193 (YIVM…SYIW), 200 to 220 (IGSL…IYTF), 224 to 244 (ILIP…GPAV), 276 to 296 (FALH…AFYV), 305 to 325 (LVAG…ITEP), 326 to 346 (IEFT…VLAA), 357 to 377 (VVGN…IPLF), and 382 to 402 (MTYV…FFVF). A PTS EIIB type-1 domain is found at 449-527 (DDTAFLYIEA…RERVEKILNQ (79 aa)). The active-site Phosphocysteine intermediate; for EIIB activity is Cys471.

It localises to the cell membrane. The enzyme catalyses D-maltose(out) + N(pros)-phospho-L-histidyl-[protein] = alpha-maltose 6'-phosphate(in) + L-histidyl-[protein]. The phosphoenolpyruvate-dependent sugar phosphotransferase system (sugar PTS), a major carbohydrate active transport system, catalyzes the phosphorylation of incoming sugar substrates concomitantly with their translocation across the cell membrane. This system is involved in maltose transport. This chain is PTS system maltose-specific EIICB component, found in Bacillus subtilis (strain 168).